Consider the following 477-residue polypeptide: 3-isopropylmalate dehydratase large subunit (477 aa).

Residues cysteine 352, cysteine 413, and cysteine 416 each contribute to the [4Fe-4S] cluster site.

Belongs to the aconitase/IPM isomerase family. LeuC type 1 subfamily. Heterodimer of LeuC and LeuD. It depends on [4Fe-4S] cluster as a cofactor.

The catalysed reaction is (2R,3S)-3-isopropylmalate = (2S)-2-isopropylmalate. It participates in amino-acid biosynthesis; L-leucine biosynthesis; L-leucine from 3-methyl-2-oxobutanoate: step 2/4. Functionally, catalyzes the isomerization between 2-isopropylmalate and 3-isopropylmalate, via the formation of 2-isopropylmaleate. This chain is 3-isopropylmalate dehydratase large subunit, found in Pseudomonas putida (strain W619).